Reading from the N-terminus, the 456-residue chain is Trigger factor (456 aa).

One can recognise a PPIase FKBP-type domain in the interval Gly-166–Pro-245.

This sequence belongs to the FKBP-type PPIase family. Tig subfamily.

The protein localises to the cytoplasm. It catalyses the reaction [protein]-peptidylproline (omega=180) = [protein]-peptidylproline (omega=0). Involved in protein export. Acts as a chaperone by maintaining the newly synthesized protein in an open conformation. Functions as a peptidyl-prolyl cis-trans isomerase. The chain is Trigger factor from Bifidobacterium adolescentis (strain ATCC 15703 / DSM 20083 / NCTC 11814 / E194a).